The primary structure comprises 293 residues: 3-methyl-2-oxobutanoate hydroxymethyltransferase (293 aa).

The tract at residues 1–29 (MTAAHDRSENQPGRPGGETTAPYGSAPRR) is disordered. Mg(2+) contacts are provided by Asp73 and Asp112. 3-methyl-2-oxobutanoate is bound by residues 73 to 74 (DS), Asp112, and Lys142. Residue Glu144 participates in Mg(2+) binding. Glu210 serves as the catalytic Proton acceptor.

This sequence belongs to the PanB family. In terms of assembly, homodecamer; pentamer of dimers. Mg(2+) is required as a cofactor.

It localises to the cytoplasm. It carries out the reaction 3-methyl-2-oxobutanoate + (6R)-5,10-methylene-5,6,7,8-tetrahydrofolate + H2O = 2-dehydropantoate + (6S)-5,6,7,8-tetrahydrofolate. It participates in cofactor biosynthesis; (R)-pantothenate biosynthesis; (R)-pantoate from 3-methyl-2-oxobutanoate: step 1/2. In terms of biological role, catalyzes the reversible reaction in which hydroxymethyl group from 5,10-methylenetetrahydrofolate is transferred onto alpha-ketoisovalerate to form ketopantoate. The chain is 3-methyl-2-oxobutanoate hydroxymethyltransferase from Saccharopolyspora erythraea (strain ATCC 11635 / DSM 40517 / JCM 4748 / NBRC 13426 / NCIMB 8594 / NRRL 2338).